We begin with the raw amino-acid sequence, 747 residues long: MCGLAGIINLAAPRSQECTFHILKGMADAISYRGPDDEQYHIDSKVGFAFRRLSILDLVNGQQPFLNEDGSIVVMVNGEIYNYKELKASLHNHMFKTTSDCEVIVHLYEEKGIGFVDDIIGMFSIAIWDKNKNKVFLVRDRFGIKPLFYTELKHELIFASEIKSLFSHPHCPRQFNWKEALSDIWLSGEAASNHKETTSFFVNIQNLDAGHYLEINLTTNERKTASYWSLQDILLRQGYRENLHPDDLIEGYRELLADSVHRCLQSDVEVGLFLSGGIDSAAVAHFAAEKQDLHTFTVLSQSTFTNEDAKYAHWLAKDLHLPNHQVLYQLGNDELLQPESYKHLLWICETPFCGPEQLYKFHLHKYAKAIRPNLKVMLTGQGSDEFNGGYSTTLSPAENPSWEGFIESVNTMEMNRLHRLQGNIFRVWEEHFGLSPINLSYLKSNDSSQADPWQSYVLTKYRDLQMYNCWHEDRIAAANHIENRVPFLDHRLVEWVCGIPDGLRKDLLWDKSVLRKSLTNELHTSYTHRPKVPFFYGKDVRYTHKMMFHLLKKNNYQLIEEAFSHSDASSIIQVEHIHAIMTYLEDDPEFTNFEFLLRLVNMGLLSKMTKETPSVQLDITSHLESITIKDWHSQEGDIASRLNISANKCEGQDILALNPGVTLLRPESDSEHCIYIAEEGFIQFIVSEEDVGAWLHILCDINGKDTLHTILDRHGVSLEEVAKYIQEAIEHNIILIKQKNLPEGAYR.

Cysteine 2 serves as the catalytic For GATase activity. The Glutamine amidotransferase type-2 domain maps to 2–218 (CGLAGIINLA…AGHYLEINLT (217 aa)). L-glutamine contacts are provided by residues 52–56 (RLSIL), 77–79 (NGE), and aspartate 100. Residue 395 to 396 (SP) participates in ATP binding.

Belongs to the asparagine synthetase family.

It catalyses the reaction L-aspartate + L-glutamine + ATP + H2O = L-asparagine + L-glutamate + AMP + diphosphate + H(+). It functions in the pathway amino-acid biosynthesis; L-asparagine biosynthesis; L-asparagine from L-aspartate (L-Gln route): step 1/1. The chain is Asparagine synthetase [glutamine-hydrolyzing] 2 (asnH) from Bacillus subtilis (strain 168).